The chain runs to 228 residues: LexA repressor (228 aa).

The segment at residues 26-46 (FDEMKEALDLRSKSGIHRLIT) is a DNA-binding region (H-T-H motif). Catalysis depends on for autocatalytic cleavage activity residues Ser149 and Lys187.

Belongs to the peptidase S24 family. In terms of assembly, homodimer.

It carries out the reaction Hydrolysis of Ala-|-Gly bond in repressor LexA.. Its function is as follows. Represses a number of genes involved in the response to DNA damage (SOS response), including recA and lexA. In the presence of single-stranded DNA, RecA interacts with LexA causing an autocatalytic cleavage which disrupts the DNA-binding part of LexA, leading to derepression of the SOS regulon and eventually DNA repair. This chain is LexA repressor, found in Jannaschia sp. (strain CCS1).